Reading from the N-terminus, the 2281-residue chain is Protein Ycf2 (2281 aa).

Position 1635–1642 (1635–1642 (GSIGSGRS)) interacts with ATP.

This sequence belongs to the Ycf2 family.

The protein localises to the plastid. The protein resides in the chloroplast stroma. Functionally, probable ATPase of unknown function. Its presence in a non-photosynthetic plant (Epifagus virginiana) and experiments in tobacco indicate that it has an essential function which is probably not related to photosynthesis. This is Protein Ycf2 from Coffea arabica (Arabian coffee).